The following is a 180-amino-acid chain: Oligoribonuclease (180 aa).

In terms of domain architecture, Exonuclease spans L7–L170. Y128 is a catalytic residue.

The protein belongs to the oligoribonuclease family.

It is found in the cytoplasm. Functionally, 3'-to-5' exoribonuclease specific for small oligoribonucleotides. This is Oligoribonuclease from Pectobacterium atrosepticum (strain SCRI 1043 / ATCC BAA-672) (Erwinia carotovora subsp. atroseptica).